The chain runs to 387 residues: Acyltransferase MdmB (387 aa).

A run of 10 helical transmembrane segments spans residues 8-28 (LPSL…CHIA), 45-65 (ITTL…FVLA), 85-105 (IYPL…SLAE), 139-161 (TPSW…YRLV), 170-190 (WWCA…TSQF), 209-229 (CWLP…ALIL), 236-256 (GPGV…TQVV), 258-278 (PMFT…TALA), 292-312 (AVLV…FMVI), and 336-356 (ALAL…HTVV).

It belongs to the acyltransferase 3 family.

It localises to the cell membrane. Functionally, catalyzes the acylation of the mycaminose sugar during midecamycin biosynthesis. The chain is Acyltransferase MdmB (mdmB) from Streptomyces mycarofaciens.